We begin with the raw amino-acid sequence, 335 residues long: Fructose-1,6-bisphosphatase class 1 (335 aa).

Mg(2+) is bound by residues Glu92, Asp114, Leu116, and Asp117. Residues 117–120 (DGSS) and Asn209 contribute to the substrate site. Residue Glu281 participates in Mg(2+) binding.

The protein belongs to the FBPase class 1 family. Homotetramer. The cofactor is Mg(2+).

It is found in the cytoplasm. The catalysed reaction is beta-D-fructose 1,6-bisphosphate + H2O = beta-D-fructose 6-phosphate + phosphate. Its pathway is carbohydrate biosynthesis; gluconeogenesis. This is Fructose-1,6-bisphosphatase class 1 from Nitrosococcus oceani (strain ATCC 19707 / BCRC 17464 / JCM 30415 / NCIMB 11848 / C-107).